We begin with the raw amino-acid sequence, 195 residues long: Probable molybdenum cofactor guanylyltransferase (195 aa).

Residues 8 to 10 (LSG), Lys20, Asp65, and Asp96 each bind GTP. Asp96 is a Mg(2+) binding site.

The protein belongs to the MobA family. It depends on Mg(2+) as a cofactor.

It is found in the cytoplasm. The enzyme catalyses Mo-molybdopterin + GTP + H(+) = Mo-molybdopterin guanine dinucleotide + diphosphate. Functionally, transfers a GMP moiety from GTP to Mo-molybdopterin (Mo-MPT) cofactor (Moco or molybdenum cofactor) to form Mo-molybdopterin guanine dinucleotide (Mo-MGD) cofactor. This is Probable molybdenum cofactor guanylyltransferase from Bacillus licheniformis (strain ATCC 14580 / DSM 13 / JCM 2505 / CCUG 7422 / NBRC 12200 / NCIMB 9375 / NCTC 10341 / NRRL NRS-1264 / Gibson 46).